The chain runs to 155 residues: Transcriptional repressor NrdR (155 aa).

Residues 1–24 (MRCPYCGHEDSQVKDSRPTEDGAA) form a disordered region. A zinc finger lies at 3-34 (CPYCGHEDSQVKDSRPTEDGAAIRRRRQCEDC). Residues 7 to 24 (GHEDSQVKDSRPTEDGAA) are compositionally biased toward basic and acidic residues. The ATP-cone domain maps to 49 to 139 (VVVIKAGGTR…VYRDFTEARD (91 aa)).

It belongs to the NrdR family. Zn(2+) is required as a cofactor.

Its function is as follows. Negatively regulates transcription of bacterial ribonucleotide reductase nrd genes and operons by binding to NrdR-boxes. The chain is Transcriptional repressor NrdR from Sphingopyxis alaskensis (strain DSM 13593 / LMG 18877 / RB2256) (Sphingomonas alaskensis).